We begin with the raw amino-acid sequence, 184 residues long: ATP synthase subunit b, chloroplastic (184 aa).

A helical membrane pass occupies residues 27-49 (LATNPINLSVVLGVLIFFGKGVL).

This sequence belongs to the ATPase B chain family. F-type ATPases have 2 components, F(1) - the catalytic core - and F(0) - the membrane proton channel. F(1) has five subunits: alpha(3), beta(3), gamma(1), delta(1), epsilon(1). F(0) has four main subunits: a(1), b(1), b'(1) and c(10-14). The alpha and beta chains form an alternating ring which encloses part of the gamma chain. F(1) is attached to F(0) by a central stalk formed by the gamma and epsilon chains, while a peripheral stalk is formed by the delta, b and b' chains.

It localises to the plastid. The protein localises to the chloroplast thylakoid membrane. F(1)F(0) ATP synthase produces ATP from ADP in the presence of a proton or sodium gradient. F-type ATPases consist of two structural domains, F(1) containing the extramembraneous catalytic core and F(0) containing the membrane proton channel, linked together by a central stalk and a peripheral stalk. During catalysis, ATP synthesis in the catalytic domain of F(1) is coupled via a rotary mechanism of the central stalk subunits to proton translocation. Functionally, component of the F(0) channel, it forms part of the peripheral stalk, linking F(1) to F(0). The sequence is that of ATP synthase subunit b, chloroplastic from Eucalyptus globulus subsp. globulus (Tasmanian blue gum).